A 317-amino-acid chain; its full sequence is Thiamine thiazole synthase (317 aa).

Substrate is bound by residues Cys78, 99 to 100 (EA), Gly107, and Val172. The residue at position 206 (Cys206) is a 2,3-didehydroalanine (Cys). Residues Asp208, His223, Met275, and 285 to 287 (RMG) each bind substrate.

This sequence belongs to the THI4 family. Homooctamer. It depends on Fe cation as a cofactor. During the catalytic reaction, a sulfide is transferred from Cys-206 to a reaction intermediate, generating a dehydroalanine residue.

The protein resides in the cytoplasm. It localises to the nucleus. It catalyses the reaction [ADP-thiazole synthase]-L-cysteine + glycine + NAD(+) = [ADP-thiazole synthase]-dehydroalanine + ADP-5-ethyl-4-methylthiazole-2-carboxylate + nicotinamide + 3 H2O + 2 H(+). Involved in biosynthesis of the thiamine precursor thiazole. Catalyzes the conversion of NAD and glycine to adenosine diphosphate 5-(2-hydroxyethyl)-4-methylthiazole-2-carboxylic acid (ADT), an adenylated thiazole intermediate. The reaction includes an iron-dependent sulfide transfer from a conserved cysteine residue of the protein to a thiazole intermediate. The enzyme can only undergo a single turnover, which suggests it is a suicide enzyme. May have additional roles in adaptation to various stress conditions and in DNA damage tolerance. The sequence is that of Thiamine thiazole synthase from Yarrowia lipolytica (strain CLIB 122 / E 150) (Yeast).